The primary structure comprises 186 residues: Elongation factor P (186 aa).

This sequence belongs to the elongation factor P family.

Its subcellular location is the cytoplasm. The protein operates within protein biosynthesis; polypeptide chain elongation. In terms of biological role, involved in peptide bond synthesis. Stimulates efficient translation and peptide-bond synthesis on native or reconstituted 70S ribosomes in vitro. Probably functions indirectly by altering the affinity of the ribosome for aminoacyl-tRNA, thus increasing their reactivity as acceptors for peptidyl transferase. This is Elongation factor P from Acidobacterium capsulatum (strain ATCC 51196 / DSM 11244 / BCRC 80197 / JCM 7670 / NBRC 15755 / NCIMB 13165 / 161).